Here is a 188-residue protein sequence, read N- to C-terminus: Ribosome-recycling factor (188 aa).

The protein belongs to the RRF family.

It localises to the cytoplasm. Functionally, responsible for the release of ribosomes from messenger RNA at the termination of protein biosynthesis. May increase the efficiency of translation by recycling ribosomes from one round of translation to another. The sequence is that of Ribosome-recycling factor from Anaeromyxobacter sp. (strain K).